Consider the following 470-residue polypeptide: Cell division protein FtsP (470 aa).

A signal peptide (tat-type signal) is located at residues 1 to 27 (MSLSRRQFIQASGIALCAGAVPLKASA). In terms of domain architecture, Plastocyanin-like spans 229–287 (VRLRLLNASNSRRYQLQMSDGRPLHVISGDQGFLPAPVSVKQLSLAPGERREILVDMSN).

It belongs to the FtsP family. In terms of processing, predicted to be exported by the Tat system. The position of the signal peptide cleavage has not been experimentally proven.

It localises to the periplasm. Functionally, cell division protein that is required for growth during stress conditions. May be involved in protecting or stabilizing the divisomal assembly under conditions of stress. This chain is Cell division protein FtsP, found in Shigella dysenteriae serotype 1 (strain Sd197).